A 161-amino-acid chain; its full sequence is Regulatory protein RecX (161 aa).

This sequence belongs to the RecX family.

It localises to the cytoplasm. In terms of biological role, modulates RecA activity. The polypeptide is Regulatory protein RecX (Thermotoga petrophila (strain ATCC BAA-488 / DSM 13995 / JCM 10881 / RKU-1)).